The following is a 500-amino-acid chain: Glutamate--tRNA ligase (500 aa).

Residues 13–23 carry the 'HIGH' region motif; it reads PSPTGTPHVGM. Positions 258–262 match the 'KMSKS' region motif; it reads KLSKR. Position 261 (Lys-261) interacts with ATP.

Belongs to the class-I aminoacyl-tRNA synthetase family. Glutamate--tRNA ligase type 1 subfamily. As to quaternary structure, monomer.

It is found in the cytoplasm. It catalyses the reaction tRNA(Glu) + L-glutamate + ATP = L-glutamyl-tRNA(Glu) + AMP + diphosphate. Functionally, catalyzes the attachment of glutamate to tRNA(Glu) in a two-step reaction: glutamate is first activated by ATP to form Glu-AMP and then transferred to the acceptor end of tRNA(Glu). The chain is Glutamate--tRNA ligase from Corynebacterium jeikeium (strain K411).